The chain runs to 445 residues: Phosphoglucosamine mutase (445 aa).

The active-site Phosphoserine intermediate is the S99. Mg(2+)-binding residues include S99, D242, D244, and D246. S99 bears the Phosphoserine mark.

The protein belongs to the phosphohexose mutase family. It depends on Mg(2+) as a cofactor. Post-translationally, activated by phosphorylation.

It carries out the reaction alpha-D-glucosamine 1-phosphate = D-glucosamine 6-phosphate. Catalyzes the conversion of glucosamine-6-phosphate to glucosamine-1-phosphate. This is Phosphoglucosamine mutase from Campylobacter lari (strain RM2100 / D67 / ATCC BAA-1060).